The sequence spans 462 residues: ATP synthase subunit beta (462 aa).

G151 to T158 contributes to the ATP binding site.

Belongs to the ATPase alpha/beta chains family. As to quaternary structure, F-type ATPases have 2 components, CF(1) - the catalytic core - and CF(0) - the membrane proton channel. CF(1) has five subunits: alpha(3), beta(3), gamma(1), delta(1), epsilon(1). CF(0) has three main subunits: a(1), b(2) and c(9-12). The alpha and beta chains form an alternating ring which encloses part of the gamma chain. CF(1) is attached to CF(0) by a central stalk formed by the gamma and epsilon chains, while a peripheral stalk is formed by the delta and b chains.

It is found in the cell inner membrane. The catalysed reaction is ATP + H2O + 4 H(+)(in) = ADP + phosphate + 5 H(+)(out). Functionally, produces ATP from ADP in the presence of a proton gradient across the membrane. The catalytic sites are hosted primarily by the beta subunits. The chain is ATP synthase subunit beta from Chlorobium limicola.